Consider the following 68-residue polypeptide: U-scoloptoxin(02)-Er1a (68 aa).

Positions 1 to 20 are cleaved as a signal peptide; that stretch reads MIVSLRCCLLLVALLITVET. Intrachain disulfides connect cysteine 30/cysteine 52, cysteine 38/cysteine 58, and cysteine 42/cysteine 60.

This sequence belongs to the invertebrate defensin family. Expressed by the venom gland.

The protein resides in the secreted. Functionally, antibacterial peptide mostly active against Gram-positive bacteria. The sequence is that of U-scoloptoxin(02)-Er1a from Ethmostigmus rubripes (Giant centipede).